The primary structure comprises 401 residues: Nicotinate phosphoribosyltransferase (401 aa).

Phosphohistidine; by autocatalysis is present on His221.

The protein belongs to the NAPRTase family. In terms of processing, transiently phosphorylated on a His residue during the reaction cycle. Phosphorylation strongly increases the affinity for substrates and increases the rate of nicotinate D-ribonucleotide production. Dephosphorylation regenerates the low-affinity form of the enzyme, leading to product release.

The enzyme catalyses nicotinate + 5-phospho-alpha-D-ribose 1-diphosphate + ATP + H2O = nicotinate beta-D-ribonucleotide + ADP + phosphate + diphosphate. The protein operates within cofactor biosynthesis; NAD(+) biosynthesis; nicotinate D-ribonucleotide from nicotinate: step 1/1. In terms of biological role, catalyzes the synthesis of beta-nicotinate D-ribonucleotide from nicotinate and 5-phospho-D-ribose 1-phosphate at the expense of ATP. In Serratia proteamaculans (strain 568), this protein is Nicotinate phosphoribosyltransferase.